Here is a 202-residue protein sequence, read N- to C-terminus: Putative transmembrane protein ORF202 (202 aa).

5 helical membrane passes run 13–33 (AIAFGLAYSILEVNVPLFHYI), 40–60 (VFYLIIFAIANMTLPLSLFLG), 87–107 (YYPVIDGIPIADVIEVIISVF), 156–176 (YGALTLVLVSVLAILSSHSLS), and 177–197 (LTAFATLSLIVGTGIFVDLWA).

The protein resides in the host membrane. The sequence is that of Putative transmembrane protein ORF202 from Acidianus filamentous virus 2 (isolate Italy/Pozzuoli) (AFV-2).